Consider the following 550-residue polypeptide: Arginine--tRNA ligase (550 aa).

A 'HIGH' region motif is present at residues 130-140 (ANPTGPIHLGG).

Belongs to the class-I aminoacyl-tRNA synthetase family. Monomer.

Its subcellular location is the cytoplasm. The enzyme catalyses tRNA(Arg) + L-arginine + ATP = L-arginyl-tRNA(Arg) + AMP + diphosphate. The sequence is that of Arginine--tRNA ligase from Rhodococcus jostii (strain RHA1).